A 942-amino-acid chain; its full sequence is Protein inturned (942 aa).

The interval 1–52 is disordered; sequence MASVASCDSRPSSDELPGDPSSQEEDEDYDFEDRVSDSGSYSSASSDYDDLE. Residues 22–31 show a composition bias toward acidic residues; that stretch reads SQEEDEDYDF. The segment covering 37–46 has biased composition (low complexity); sequence DSGSYSSASS. The PDZ domain occupies 185 to 263; it reads LVGIIHQTKW…PMQVKLTFEN (79 aa). Ser-670 and Ser-674 each carry phosphoserine. The tract at residues 704-754 is disordered; that stretch reads TRKPSPSCSSGGSDNGCEGGEDDGFSPHTTPDAVRKQRESQGSDGLEESGT.

Belongs to the inturned family. Component of the CPLANE (ciliogenesis and planar polarity effectors) complex, composed of INTU, FUZ and WDPCP. Interacts with CPLANE1. Interacts with NPHP4 and DAAM1; INTU is mediating the interaction between NPHP4 and DAAM1.

The protein resides in the cytoplasm. Its subcellular location is the cell surface. It is found in the cytoskeleton. It localises to the cilium basal body. The protein localises to the microtubule organizing center. The protein resides in the centrosome. Its subcellular location is the centriole. Functionally, plays a key role in ciliogenesis and embryonic development. Regulator of cilia formation by controlling the organization of the apical actin cytoskeleton and the positioning of the basal bodies at the apical cell surface, which in turn is essential for the normal orientation of elongating ciliary microtubules. Plays a key role in definition of cell polarity via its role in ciliogenesis but not via conversion extension. Has an indirect effect on hedgehog signaling. Proposed to function as core component of the CPLANE (ciliogenesis and planar polarity effectors) complex involved in the recruitment of peripheral IFT-A proteins to basal bodies. Required for recruitment of CPLANE2 to the mother centriole. Binds phosphatidylinositol 3-phosphate with highest affinity, followed by phosphatidylinositol 4-phosphate and phosphatidylinositol 5-phosphate. The chain is Protein inturned (INTU) from Homo sapiens (Human).